The chain runs to 305 residues: UDP-3-O-acyl-N-acetylglucosamine deacetylase (305 aa).

Zn(2+) is bound by residues His79, His238, and Asp242. His265 (proton donor) is an active-site residue.

It belongs to the LpxC family. The cofactor is Zn(2+).

It catalyses the reaction a UDP-3-O-[(3R)-3-hydroxyacyl]-N-acetyl-alpha-D-glucosamine + H2O = a UDP-3-O-[(3R)-3-hydroxyacyl]-alpha-D-glucosamine + acetate. It participates in glycolipid biosynthesis; lipid IV(A) biosynthesis; lipid IV(A) from (3R)-3-hydroxytetradecanoyl-[acyl-carrier-protein] and UDP-N-acetyl-alpha-D-glucosamine: step 2/6. Catalyzes the hydrolysis of UDP-3-O-myristoyl-N-acetylglucosamine to form UDP-3-O-myristoylglucosamine and acetate, the committed step in lipid A biosynthesis. This Haemophilus influenzae (strain 86-028NP) protein is UDP-3-O-acyl-N-acetylglucosamine deacetylase.